The following is a 561-amino-acid chain: Asparagine synthetase [glutamine-hydrolyzing] (561 aa).

Cys-2 acts as the For GATase activity in catalysis. The 190-residue stretch at 2–191 (CGIWALFGSD…PGHYEVLDLK (190 aa)) folds into the Glutamine amidotransferase type-2 domain. L-glutamine-binding positions include 49–53 (RLAVV), 75–77 (NGE), and Asp-97. The Asparagine synthetase domain maps to 213-536 (HALYDSVEKL…PGRADWLTHY (324 aa)). Residues Leu-256, Ile-288, and 363–364 (SG) each bind ATP. At Lys-385 the chain carries N6-acetyllysine. A Phosphothreonine modification is found at Thr-545. Ser-557 is modified (phosphoserine).

It carries out the reaction L-aspartate + L-glutamine + ATP + H2O = L-asparagine + L-glutamate + AMP + diphosphate + H(+). Its pathway is amino-acid biosynthesis; L-asparagine biosynthesis; L-asparagine from L-aspartate (L-Gln route): step 1/1. The sequence is that of Asparagine synthetase [glutamine-hydrolyzing] (ASNS) from Mesocricetus auratus (Golden hamster).